A 457-amino-acid chain; its full sequence is Peptidyl-prolyl cis-trans isomerase FKBP5 (457 aa).

At methionine 1 the chain carries N-acetylmethionine. The disordered stretch occupies residues 1 to 26; the sequence is MTTDEGAKNNGESPTATVAEQGEDIT. Phosphoserine is present on serine 13. PPIase FKBP-type domains follow at residues 50–138 and 165–251; these read GDKV…LDFK and GATV…KSFE. 3 TPR repeats span residues 268 to 301, 317 to 350, and 351 to 384; these read AAIV…LEME, LAAF…DSAN, and GKGL…NPQN. Residues 420-457 form a disordered region; sequence DAKEEANKAMGKKTSEGVTNEKGTDSQAMEEEKPEGHV. Phosphoserine is present on serine 445.

In terms of assembly, part of a heteromultimeric cytoplasmic complex with HSP90AA1, HSPA1A/HSPA1B and steroid receptors. Upon ligand binding dissociates from the complex and FKBP4 takes its place. Interacts with functionally mature heterooligomeric progesterone receptor complexes along with HSP90 and TEBP. Interacts with IFI44L; this interaction modulates the kinase activity of IKBKB and IKBKE. Interacts with IKBKB and IKBKE.

The protein localises to the cytoplasm. It is found in the nucleus. It carries out the reaction [protein]-peptidylproline (omega=180) = [protein]-peptidylproline (omega=0). With respect to regulation, inhibited by FK506 but not cyclosporin. Its function is as follows. Immunophilin protein with PPIase and co-chaperone activities. Component of unligated steroid receptors heterocomplexes through interaction with heat-shock protein 90 (HSP90). Plays a role in the intracellular trafficking of heterooligomeric forms of steroid hormone receptors maintaining the complex into the cytoplasm when unliganded. Acts as a regulator of Akt/AKT1 activity by promoting the interaction between Akt/AKT1 and PHLPP1, thereby enhancing dephosphorylation and subsequent activation of Akt/AKT1. Interacts with IKBKE and IKBKB which facilitates IKK complex assembly leading to increased IKBKE and IKBKB kinase activity, NF-kappaB activation, and IFN production. This chain is Peptidyl-prolyl cis-trans isomerase FKBP5 (FKBP5), found in Pongo abelii (Sumatran orangutan).